Here is a 1189-residue protein sequence, read N- to C-terminus: Tyrosine-protein phosphatase non-receptor type 14 (1189 aa).

The 286-residue stretch at 21-306 (FVTRIRLLDS…TRHKFYKQNK (286 aa)) folds into the FERM domain. Phosphoserine occurs at positions 314, 461, 486, 591, 593, 594, and 646. A disordered region spans residues 744 to 775 (ARIPNRPPPEYPGPRKSVSNGALRQDQGTPLP). The segment covering 760-771 (SVSNGALRQDQG) has biased composition (polar residues). A Phosphoserine modification is found at serine 833. Positions 911 to 1182 (VFTEYEQIPN…KFVYQVLVQF (272 aa)) constitute a Tyrosine-protein phosphatase domain. Cysteine 1123 acts as the Phosphocysteine intermediate in catalysis. Residues 1123-1129 (CSAGVGR) and glutamine 1167 contribute to the substrate site.

This sequence belongs to the protein-tyrosine phosphatase family. Non-receptor class subfamily. As to quaternary structure, interacts with FLT4; the interaction is enhanced by stimulation with VEGFC. Interacts (via PPxY motifs) with YAP1 (via WW domains); this interaction leads to the cytoplasmic sequestration of YAP1 and inhibits its transcriptional coactivator activity. Post-translationally, ubiquitinated by the ECS (Elongin BC-CUL2/5-SOCS-box protein)/LRR1 E3 ligase complex and subsequently targeted to proteasomal degradation. Thymus; in cells of both hematopoietic and non-hematopoietic origins.

It localises to the cytoplasm. The protein localises to the cytoskeleton. It is found in the nucleus. The enzyme catalyses O-phospho-L-tyrosyl-[protein] + H2O = L-tyrosyl-[protein] + phosphate. Protein tyrosine phosphatase which may play a role in the regulation of lymphangiogenesis, cell-cell adhesion, cell-matrix adhesion, cell migration, cell growth and also regulates TGF-beta gene expression, thereby modulating epithelial-mesenchymal transition. Mediates beta-catenin dephosphorylation at adhesion junctions. Acts as a negative regulator of the oncogenic property of YAP, a downstream target of the hippo pathway, in a cell density-dependent manner. May function as a tumor suppressor. The polypeptide is Tyrosine-protein phosphatase non-receptor type 14 (Ptpn14) (Mus musculus (Mouse)).